Here is a 701-residue protein sequence, read N- to C-terminus: Polyribonucleotide nucleotidyltransferase (701 aa).

The Mg(2+) site is built by aspartate 485 and aspartate 491. The KH domain maps to proline 552 to isoleucine 611. Residues glycine 621–lysine 689 enclose the S1 motif domain.

It belongs to the polyribonucleotide nucleotidyltransferase family. The cofactor is Mg(2+).

Its subcellular location is the cytoplasm. It catalyses the reaction RNA(n+1) + phosphate = RNA(n) + a ribonucleoside 5'-diphosphate. Its function is as follows. Involved in mRNA degradation. Catalyzes the phosphorolysis of single-stranded polyribonucleotides processively in the 3'- to 5'-direction. This chain is Polyribonucleotide nucleotidyltransferase, found in Clostridium beijerinckii (strain ATCC 51743 / NCIMB 8052) (Clostridium acetobutylicum).